A 466-amino-acid polypeptide reads, in one-letter code: Glutamate-1-semialdehyde 2,1-aminomutase (466 aa).

Residue Lys-292 is modified to N6-(pyridoxal phosphate)lysine.

Belongs to the class-III pyridoxal-phosphate-dependent aminotransferase family. HemL subfamily. As to quaternary structure, homodimer. The cofactor is pyridoxal 5'-phosphate.

The protein resides in the cytoplasm. The catalysed reaction is (S)-4-amino-5-oxopentanoate = 5-aminolevulinate. The protein operates within porphyrin-containing compound metabolism; protoporphyrin-IX biosynthesis; 5-aminolevulinate from L-glutamyl-tRNA(Glu): step 2/2. This chain is Glutamate-1-semialdehyde 2,1-aminomutase, found in Tropheryma whipplei (strain TW08/27) (Whipple's bacillus).